Consider the following 357-residue polypeptide: Peptide chain release factor 1 (357 aa).

Gln236 bears the N5-methylglutamine mark.

It belongs to the prokaryotic/mitochondrial release factor family. In terms of processing, methylated by PrmC. Methylation increases the termination efficiency of RF1.

It is found in the cytoplasm. In terms of biological role, peptide chain release factor 1 directs the termination of translation in response to the peptide chain termination codons UAG and UAA. This chain is Peptide chain release factor 1, found in Mycolicibacterium paratuberculosis (strain ATCC BAA-968 / K-10) (Mycobacterium paratuberculosis).